We begin with the raw amino-acid sequence, 243 residues long: UPF0246 protein SAK_2020 (243 aa).

The protein belongs to the UPF0246 family.

This chain is UPF0246 protein SAK_2020, found in Streptococcus agalactiae serotype Ia (strain ATCC 27591 / A909 / CDC SS700).